A 341-amino-acid polypeptide reads, in one-letter code: Paired box protein Pax-9 (341 aa).

The paired DNA-binding region spans alanine 4–lysine 130. The PAI subdomain stretch occupies residues glutamate 7–threonine 63. Residues threonine 82–lysine 130 are RED subdomain. The interaction with KDM5B stretch occupies residues alanine 168 to proline 189.

Interacts with KDM5B.

The protein localises to the nucleus. Functionally, transcription factor required for normal development of thymus, parathyroid glands, ultimobranchial bodies, teeth, skeletal elements of skull and larynx as well as distal limbs. The polypeptide is Paired box protein Pax-9 (PAX9) (Daubentonia madagascariensis (Aye-aye)).